Reading from the N-terminus, the 235-residue chain is Probable transcriptional regulatory protein Cj1172c (235 aa).

This sequence belongs to the TACO1 family.

The protein resides in the cytoplasm. The polypeptide is Probable transcriptional regulatory protein Cj1172c (Campylobacter jejuni subsp. jejuni serotype O:2 (strain ATCC 700819 / NCTC 11168)).